Consider the following 535-residue polypeptide: CTP synthase (535 aa).

The tract at residues 1 to 268 (MKTKYIFVTG…DSLVCKKLEL (268 aa)) is amidoligase domain. S14 serves as a coordination point for CTP. S14 is a binding site for UTP. Residue 15-20 (SLGKGI) coordinates ATP. Y55 is an L-glutamine binding site. D72 provides a ligand contact to ATP. Residues D72 and E142 each coordinate Mg(2+). CTP-binding positions include 149–151 (DIE), 189–194 (KTKPTQ), and K225. UTP-binding positions include 189-194 (KTKPTQ) and K225. Residues 293–535 (TIGLVGKYVE…IKVACTVKEK (243 aa)) form the Glutamine amidotransferase type-1 domain. Position 355 (G355) interacts with L-glutamine. C382 (nucleophile; for glutamine hydrolysis) is an active-site residue. Residues 383–386 (LGMQ), E406, and R463 each bind L-glutamine. Catalysis depends on residues H508 and E510.

The protein belongs to the CTP synthase family. Homotetramer.

It catalyses the reaction UTP + L-glutamine + ATP + H2O = CTP + L-glutamate + ADP + phosphate + 2 H(+). The enzyme catalyses L-glutamine + H2O = L-glutamate + NH4(+). It carries out the reaction UTP + NH4(+) + ATP = CTP + ADP + phosphate + 2 H(+). The protein operates within pyrimidine metabolism; CTP biosynthesis via de novo pathway; CTP from UDP: step 2/2. Allosterically activated by GTP, when glutamine is the substrate; GTP has no effect on the reaction when ammonia is the substrate. The allosteric effector GTP functions by stabilizing the protein conformation that binds the tetrahedral intermediate(s) formed during glutamine hydrolysis. Inhibited by the product CTP, via allosteric rather than competitive inhibition. Catalyzes the ATP-dependent amination of UTP to CTP with either L-glutamine or ammonia as the source of nitrogen. Regulates intracellular CTP levels through interactions with the four ribonucleotide triphosphates. The chain is CTP synthase from Clostridium acetobutylicum (strain ATCC 824 / DSM 792 / JCM 1419 / IAM 19013 / LMG 5710 / NBRC 13948 / NRRL B-527 / VKM B-1787 / 2291 / W).